The following is a 757-amino-acid chain: 5-methyltetrahydropteroyltriglutamate--homocysteine methyltransferase (757 aa).

5-methyltetrahydropteroyltri-L-glutamate contacts are provided by residues R16 to K19 and K112. Residues I433–S435 and E486 contribute to the L-homocysteine site. Residues I433–S435 and E486 each bind L-methionine. Residues R517–C518 and W563 contribute to the 5-methyltetrahydropteroyltri-L-glutamate site. An L-homocysteine-binding site is contributed by D601. D601 lines the L-methionine pocket. E607 provides a ligand contact to 5-methyltetrahydropteroyltri-L-glutamate. Residues H643, C645, and E667 each coordinate Zn(2+). The Proton donor role is filled by H696. Position 728 (C728) interacts with Zn(2+).

Belongs to the vitamin-B12 independent methionine synthase family. Zn(2+) is required as a cofactor.

It catalyses the reaction 5-methyltetrahydropteroyltri-L-glutamate + L-homocysteine = tetrahydropteroyltri-L-glutamate + L-methionine. Its pathway is amino-acid biosynthesis; L-methionine biosynthesis via de novo pathway; L-methionine from L-homocysteine (MetE route): step 1/1. Functionally, catalyzes the transfer of a methyl group from 5-methyltetrahydrofolate to homocysteine resulting in methionine formation. This Pasteurella multocida (strain Pm70) protein is 5-methyltetrahydropteroyltriglutamate--homocysteine methyltransferase.